A 121-amino-acid polypeptide reads, in one-letter code: Small ribosomal subunit protein uS13 (121 aa).

Positions 91-121 (HRMSLPVRGQRTRTNARTRRGSRKTVAGRKK) are disordered. The segment covering 100-121 (QRTRTNARTRRGSRKTVAGRKK) has biased composition (basic residues).

It belongs to the universal ribosomal protein uS13 family. Part of the 30S ribosomal subunit. Forms a loose heterodimer with protein S19. Forms two bridges to the 50S subunit in the 70S ribosome.

Its function is as follows. Located at the top of the head of the 30S subunit, it contacts several helices of the 16S rRNA. In the 70S ribosome it contacts the 23S rRNA (bridge B1a) and protein L5 of the 50S subunit (bridge B1b), connecting the 2 subunits; these bridges are implicated in subunit movement. Contacts the tRNAs in the A and P-sites. This is Small ribosomal subunit protein uS13 from Prochlorococcus marinus (strain MIT 9301).